The sequence spans 866 residues: Dynamin-2 (866 aa).

Residues 28 to 294 enclose the Dynamin-type G domain; sequence HLDLPQIAVV…LTNHIRESLP (267 aa). The G1 motif stretch occupies residues 38–45; the sequence is GGQSAGKS. Positions 41, 43, 44, 45, 46, 59, and 60 each coordinate GDP. Residues 64–66 are G2 motif; it reads VTR. A G3 motif region spans residues 136 to 139; the sequence is DLPG. The interval 205 to 208 is G4 motif; the sequence is TKLD. Positions 206, 208, and 211 each coordinate GDP. Tyr231 is subject to Phosphotyrosine. A G5 motif region spans residues 235–238; the sequence is VNRS. Residues Asn236, Arg237, and Gln239 each contribute to the GDP site. Lys299 carries the post-translational modification N6-acetyllysine. Residues 515 to 621 enclose the PH domain; the sequence is QVIRRGWLTI…WKASFLRAGV (107 aa). The residue at position 593 (Tyr593) is a Phosphotyrosine. Lys594 carries the post-translational modification N6-acetyllysine. Residues 649–740 form the GED domain; it reads VETIRNLVDS…IIGDISTSTV (92 aa). The disordered stretch occupies residues 737-866; the sequence is TSTVSTPVPP…IRPAEPSLLD (130 aa). A Phosphothreonine modification is found at Thr751. Residues 752-763 show a composition bias toward polar residues; the sequence is WIQNTSSHSPTP. Ser760 carries the post-translational modification Phosphoserine; by CDK1. Composition is skewed to pro residues over residues 784–794, 802–811, and 822–851; these read TPGPPLIPVPV, PPIPSRPGPH, and SAPP…PAAP.

The protein belongs to the TRAFAC class dynamin-like GTPase superfamily. Dynamin/Fzo/YdjA family. As to quaternary structure, oligomerizes into a helical polymer that self-assembles around the vesicle membrane, when associated to the menbrane through lipid binding. Interacts with SHANK1 and SHANK2. Interacts with SNX9. Interacts (via C-terminal proline-rich domain (PRD)) with SNX18 (via SH3 domain); this interaction regulates ATG9A and ATG16L1 trafficking from recycling endosomes to sites of autophagosome formation. Interacts with SNX33 (via SH3 domain). Interacts with MYO1E (via SH3 domain). Interacts with PSTPIP1 (via SH3 domain). Interacts with CTNND2. Interacts (via C-terminal proline-rich domain (PRD)) with BIN1 (via SH3 domain); this interaction allows the recruitment of DNM2 to the membrane tubules and inhibits self-assembly-stimulated GTPase activity on the membrane. Interacts with GABARAP, GABARAPL1 and GABARAPL2. Interacts with MAP1LC3B (the lipidate and non-lipidated LC3 form); this interaction mediates recycling endosome scission leading to autophagosome release. Interacts with ITSN1. Interacts with MYOF. Interacts (via C-terminal proline-rich domain (PRD)) with SH3BP4 (via SH3 domain); this interaction controls the GTPase activity and is prevented by EGFR-induced tyrosine phosphorylation of either DNM2 or SH3BP4. May interact with PIK3C3. May be a component of a complex composed of RAB5A (in GDP-bound form), DYN2 and PIK3C3. Interacts with SDC4; this interaction is markedly enhanced at focal ahesion site upon induction of focal adhesions and stress-fiber formation. Interacts with ACTN1. Interacts with CTTN; this interaction stimulates the intrinsic GTPase activity of DNM2 and stabilizes the association of DNM2 and actin filaments; in addition this interaction is stimulated by ligand binding to the receptor, leading to the recruitment of the DNM2-CTTN complex to the sequestered receptor-ligand complex to its internalization. Interacts with NOSTRIN (via SH3 domain); this interaction allows the recruitment of NOS3 to dynamin-positive structures. Interacts with TUBG1; this interaction may participate in centrosome cohesion. Post-translationally, phosphorylation at Ser-844 by GSK3-alpha relieves the inhibition of BIN1 and promotes endocytosis. Phosphorylation at Ser-760 by CDK1 is greatly increased upon mitotic entry. It regulates cytokinesis downstream of calcineurin, and does not affect clathrin-mediated endocytosis. Dephosphorylated by calcineurin/PP2 during cytokinesis in a Ca(2+)- and calmodulin-dependent manner. Phosphorylated on tyrosine residues by EGFR and after activation of SRC.

It localises to the cytoplasm. Its subcellular location is the cytoskeleton. It is found in the cytoplasmic vesicle. The protein resides in the clathrin-coated vesicle. The protein localises to the cell projection. It localises to the uropodium. Its subcellular location is the endosome. It is found in the microtubule organizing center. The protein resides in the centrosome. The protein localises to the centriole. It localises to the recycling endosome. Its subcellular location is the phagocytic cup. It is found in the phagosome membrane. The protein resides in the podosome. The protein localises to the cell junction. It localises to the postsynaptic density. Its subcellular location is the synapse. It is found in the synaptosome. The protein resides in the midbody. The protein localises to the membrane. It localises to the clathrin-coated pit. The catalysed reaction is GTP + H2O = GDP + phosphate + H(+). Catalyzes the hydrolysis of GTP and utilizes this energy to mediate vesicle scission at plasma membrane during endocytosis and filament remodeling at many actin structures during organization of the actin cytoskeleton. Plays an important role in vesicular trafficking processes, namely clathrin-mediated endocytosis (CME), exocytic and clathrin-coated vesicle from the trans-Golgi network, and PDGF stimulated macropinocytosis. During vesicular trafficking process, associates to the membrane, through lipid binding, and self-assembles into ring-like structure through oligomerization to form a helical polymer around the vesicle membrane and leading to vesicle scission. Plays a role in organization of the actin cytoskeleton by mediating arrangement of stress fibers and actin bundles in podocytes. During organization of the actin cytoskeleton, self-assembles into ring-like structure that directly bundles actin filaments to form typical membrane tubules decorated with dynamin spiral polymers. Self-assembly increases GTPase activity and the GTP hydrolysis causes the rapid depolymerization of dynamin spiral polymers, and results in dispersion of actin bundles. Remodels, through its interaction with CTTN, bundled actin filaments in a GTPase-dependent manner and plays a role in orchestrating the global actomyosin cytoskeleton. The interaction with CTTN stabilizes the interaction of DNM2 and actin filaments and stimulates the intrinsic GTPase activity that results in actin filament-barbed ends and increases the sensitivity of filaments in bundles to the actin depolymerizing factor, CFL1. Plays a role in the autophagy process, by participating in the formation of ATG9A vesicles destined for the autophagosomes through its interaction with SNX18, by mediating recycling endosome scission leading to autophagosome release through MAP1LC3B interaction. Also regulates maturation of apoptotic cell corpse-containing phagosomes by recruiting PIK3C3 to the phagosome membrane. Also plays a role in cytokinesis. May participate in centrosome cohesion through its interaction with TUBG1. Plays a role in the regulation of neuron morphology, axon growth and formation of neuronal growth cones. Involved in membrane tubulation. This is Dynamin-2 from Bos taurus (Bovine).